Consider the following 161-residue polypeptide: Ferredoxin/F(420)H(2)-dependent CoB-CoM heterodisulfide reductase subunit C (161 aa).

2 consecutive 4Fe-4S ferredoxin-type domains span residues 10–40 (KAEG…LNTR) and 51–82 (AAVL…TDAI). [4Fe-4S] cluster is bound by residues Cys19, Cys22, Cys25, Cys29, Cys62, Cys65, Cys68, and Cys72.

It belongs to the HdrC family. As to quaternary structure, the ferredoxin/F(420)H(2)-dependent CoB-CoM heterodisulfide reductase is composed of three subunits; HdrA2, HdrB2 and HdrC2. It depends on [4Fe-4S] cluster as a cofactor.

The protein resides in the cytoplasm. The enzyme catalyses coenzyme B + coenzyme M + 2 oxidized [2Fe-2S]-[ferredoxin] = coenzyme M-coenzyme B heterodisulfide + 2 reduced [2Fe-2S]-[ferredoxin] + 2 H(+). The catalysed reaction is coenzyme B + 2 oxidized coenzyme F420-(gamma-L-Glu)(n) + coenzyme M + 2 reduced [2Fe-2S]-[ferredoxin] + 4 H(+) = coenzyme M-coenzyme B heterodisulfide + 2 reduced coenzyme F420-(gamma-L-Glu)(n) + 2 oxidized [2Fe-2S]-[ferredoxin]. The protein operates within cofactor metabolism; coenzyme M-coenzyme B heterodisulfide reduction; coenzyme B and coenzyme M from coenzyme M-coenzyme B heterodisulfide: step 1/1. In terms of biological role, part of a complex that catalyzes the reversible reduction of CoM-S-S-CoB to the thiol-coenzymes H-S-CoM (coenzyme M) and H-S-CoB (coenzyme B). Catalyzes the transfer of electrons from ferredoxin to CoM-S-S-CoB during methanogenesis from acetate. Electrons transfer from ferredoxin to CoM-S-S-CoB via HdrA2, HdrC2 and HdrB2. In addition, the complex can use electron bifurcation to direct electron pairs from reduced coenzyme F420 towards the reduction of both ferredoxin and CoB-CoM heterodisulfide. This activity may take place during Fe(III)-dependent anaerobic methane oxidation. The protein is Ferredoxin/F(420)H(2)-dependent CoB-CoM heterodisulfide reductase subunit C of Methanosarcina acetivorans (strain ATCC 35395 / DSM 2834 / JCM 12185 / C2A).